Reading from the N-terminus, the 800-residue chain is Elongation factor G, mitochondrial (800 aa).

The transit peptide at 1–34 (MSVHTVMRTQVRSLAGMPKAAMRPLGNSFCARRY) directs the protein to the mitochondrion. One can recognise a tr-type G domain in the interval 99–385 (SKVRNIGIAA…GICDYLPNPA (287 aa)). Residues 108 to 115 (AHIDSGKT), 183 to 187 (DTPGH), and 237 to 240 (NKMD) contribute to the GTP site.

The protein belongs to the TRAFAC class translation factor GTPase superfamily. Classic translation factor GTPase family. EF-G/EF-2 subfamily.

It is found in the mitochondrion. Its pathway is protein biosynthesis; polypeptide chain elongation. Its function is as follows. Mitochondrial GTPase that catalyzes the GTP-dependent ribosomal translocation step during translation elongation. During this step, the ribosome changes from the pre-translocational (PRE) to the post-translocational (POST) state as the newly formed A-site-bound peptidyl-tRNA and P-site-bound deacylated tRNA move to the P and E sites, respectively. Catalyzes the coordinated movement of the two tRNA molecules, the mRNA and conformational changes in the ribosome. In Coccidioides immitis (strain RS) (Valley fever fungus), this protein is Elongation factor G, mitochondrial.